Consider the following 491-residue polypeptide: Serine hydroxymethyltransferase (491 aa).

Residues L173 and 177–179 (GHL) each bind (6S)-5,6,7,8-tetrahydrofolate. An N6-(pyridoxal phosphate)lysine modification is found at K285.

The protein belongs to the SHMT family. Homodimer. Pyridoxal 5'-phosphate serves as cofactor.

It is found in the cytoplasm. The enzyme catalyses (6R)-5,10-methylene-5,6,7,8-tetrahydrofolate + glycine + H2O = (6S)-5,6,7,8-tetrahydrofolate + L-serine. It participates in one-carbon metabolism; tetrahydrofolate interconversion. It functions in the pathway amino-acid biosynthesis; glycine biosynthesis; glycine from L-serine: step 1/1. Functionally, catalyzes the reversible interconversion of serine and glycine with tetrahydrofolate (THF) serving as the one-carbon carrier. This reaction serves as the major source of one-carbon groups required for the biosynthesis of purines, thymidylate, methionine, and other important biomolecules. Also exhibits THF-independent aldolase activity toward beta-hydroxyamino acids, producing glycine and aldehydes, via a retro-aldol mechanism. The polypeptide is Serine hydroxymethyltransferase (Cutibacterium acnes (strain DSM 16379 / KPA171202) (Propionibacterium acnes)).